We begin with the raw amino-acid sequence, 172 residues long: Adenine phosphoribosyltransferase (172 aa).

This sequence belongs to the purine/pyrimidine phosphoribosyltransferase family. In terms of assembly, homodimer.

The protein resides in the cytoplasm. It carries out the reaction AMP + diphosphate = 5-phospho-alpha-D-ribose 1-diphosphate + adenine. It participates in purine metabolism; AMP biosynthesis via salvage pathway; AMP from adenine: step 1/1. Functionally, catalyzes a salvage reaction resulting in the formation of AMP, that is energically less costly than de novo synthesis. The chain is Adenine phosphoribosyltransferase from Prochlorococcus marinus (strain MIT 9215).